A 487-amino-acid polypeptide reads, in one-letter code: Protein nucleotidyltransferase YdiU (487 aa).

ATP is bound by residues glycine 90, glycine 92, arginine 93, lysine 113, aspartate 125, glycine 126, arginine 176, and arginine 183. Aspartate 252 acts as the Proton acceptor in catalysis. The Mg(2+) site is built by asparagine 253 and aspartate 262. Aspartate 262 contributes to the ATP binding site.

The protein belongs to the SELO family. The cofactor is Mg(2+). Requires Mn(2+) as cofactor.

The enzyme catalyses L-seryl-[protein] + ATP = 3-O-(5'-adenylyl)-L-seryl-[protein] + diphosphate. It catalyses the reaction L-threonyl-[protein] + ATP = 3-O-(5'-adenylyl)-L-threonyl-[protein] + diphosphate. It carries out the reaction L-tyrosyl-[protein] + ATP = O-(5'-adenylyl)-L-tyrosyl-[protein] + diphosphate. The catalysed reaction is L-histidyl-[protein] + UTP = N(tele)-(5'-uridylyl)-L-histidyl-[protein] + diphosphate. The enzyme catalyses L-seryl-[protein] + UTP = O-(5'-uridylyl)-L-seryl-[protein] + diphosphate. It catalyses the reaction L-tyrosyl-[protein] + UTP = O-(5'-uridylyl)-L-tyrosyl-[protein] + diphosphate. Its function is as follows. Nucleotidyltransferase involved in the post-translational modification of proteins. It can catalyze the addition of adenosine monophosphate (AMP) or uridine monophosphate (UMP) to a protein, resulting in modifications known as AMPylation and UMPylation. This Azotobacter vinelandii (strain DJ / ATCC BAA-1303) protein is Protein nucleotidyltransferase YdiU.